Consider the following 111-residue polypeptide: Short neuropeptide F (111 aa).

The signal sequence occupies residues 1–24; the sequence is MSAMYAKRCAALVLLVVTVGLVNA. A propeptide spanning residues 25 to 76 is cleaved from the precursor; that stretch reads TENYMDYGEEMAEKTPAENIHELYRLLLQRNTLDNAGFGGIPLEHLMIRKSQ. Phe85 carries the phenylalanine amide modification. A propeptide spanning residues 88–111 is cleaved from the precursor; that stretch reads SGPHVSARALPRPMGAVAGYDDNN.

In terms of tissue distribution, expressed throughout the central nervous system (at protein level).

It localises to the secreted. Functionally, plays a role in controlling food intake and regulating body size. The chain is Short neuropeptide F from Camponotus floridanus (Florida carpenter ant).